The primary structure comprises 1141 residues: Isoleucine--tRNA ligase (1141 aa).

The 'HIGH' region signature appears at 50–60 (PSANGMPGIHH). The 'KMSKS' region signature appears at 689-693 (KMSKR). Lys-692 serves as a coordination point for ATP.

This sequence belongs to the class-I aminoacyl-tRNA synthetase family. IleS type 2 subfamily. As to quaternary structure, monomer. Zn(2+) serves as cofactor.

The protein resides in the cytoplasm. It carries out the reaction tRNA(Ile) + L-isoleucine + ATP = L-isoleucyl-tRNA(Ile) + AMP + diphosphate. Its function is as follows. Catalyzes the attachment of isoleucine to tRNA(Ile). As IleRS can inadvertently accommodate and process structurally similar amino acids such as valine, to avoid such errors it has two additional distinct tRNA(Ile)-dependent editing activities. One activity is designated as 'pretransfer' editing and involves the hydrolysis of activated Val-AMP. The other activity is designated 'posttransfer' editing and involves deacylation of mischarged Val-tRNA(Ile). The chain is Isoleucine--tRNA ligase from Bacteroides fragilis (strain YCH46).